The primary structure comprises 574 residues: Arginine--tRNA ligase (574 aa).

A 'HIGH' region motif is present at residues Pro121 to His131.

It belongs to the class-I aminoacyl-tRNA synthetase family. Monomer.

Its subcellular location is the cytoplasm. The enzyme catalyses tRNA(Arg) + L-arginine + ATP = L-arginyl-tRNA(Arg) + AMP + diphosphate. This Buchnera aphidicola subsp. Acyrthosiphon pisum (strain 5A) protein is Arginine--tRNA ligase.